The primary structure comprises 450 residues: Aspartyl/glutamyl-tRNA(Asn/Gln) amidotransferase subunit B (450 aa).

This sequence belongs to the GatB/GatE family. GatB subfamily. Heterotrimer of A, B and C subunits.

The catalysed reaction is L-glutamyl-tRNA(Gln) + L-glutamine + ATP + H2O = L-glutaminyl-tRNA(Gln) + L-glutamate + ADP + phosphate + H(+). The enzyme catalyses L-aspartyl-tRNA(Asn) + L-glutamine + ATP + H2O = L-asparaginyl-tRNA(Asn) + L-glutamate + ADP + phosphate + 2 H(+). Allows the formation of correctly charged Asn-tRNA(Asn) or Gln-tRNA(Gln) through the transamidation of misacylated Asp-tRNA(Asn) or Glu-tRNA(Gln) in organisms which lack either or both of asparaginyl-tRNA or glutaminyl-tRNA synthetases. The reaction takes place in the presence of glutamine and ATP through an activated phospho-Asp-tRNA(Asn) or phospho-Glu-tRNA(Gln). The chain is Aspartyl/glutamyl-tRNA(Asn/Gln) amidotransferase subunit B from Methanobrevibacter smithii (strain ATCC 35061 / DSM 861 / OCM 144 / PS).